We begin with the raw amino-acid sequence, 330 residues long: Peptide transport system ATP-binding protein SapD (330 aa).

Positions 6–259 (IRNLTIEFKT…PHHPYTQALI (254 aa)) constitute an ABC transporter domain. 40–47 (GESGSGKS) is a binding site for ATP.

The protein belongs to the ABC transporter superfamily.

The protein resides in the cell inner membrane. In terms of biological role, involved in a peptide intake transport system that plays a role in the resistance to antimicrobial peptides. The polypeptide is Peptide transport system ATP-binding protein SapD (Salmonella typhimurium (strain LT2 / SGSC1412 / ATCC 700720)).